Consider the following 184-residue polypeptide: ADP-ribosylation factor-like protein 2 (184 aa).

Gly-2 carries N-myristoyl glycine lipidation. GTP contacts are provided by residues Gly-23–Thr-30, Asp-66–Gln-70, Gly-68, and Asn-125–Asp-128.

It belongs to the small GTPase superfamily. Arf family. As to expression, in the embryo, strongly expressed in migrating hypodermal cells. Shortly before the beginning of elongation, expressed in many developing neurons where it persists throughout adulthood. In the larva, highly expressed in migrating hypodermal cells and the uterus. Also expressed in vulva, spermatheca, sheath cells, distal tips cells and proctoderm of the male tail.

Its subcellular location is the cytoplasm. The protein localises to the cell membrane. The protein resides in the cytoskeleton. It is found in the microtubule organizing center. It localises to the centrosome. GTP-binding protein that functions in embryogenesis, cytokinesis, germline development and microtubulule cytoskeleton dynamics. The sequence is that of ADP-ribosylation factor-like protein 2 (evl-20) from Caenorhabditis elegans.